A 445-amino-acid polypeptide reads, in one-letter code: KIN17-like protein (445 aa).

The C2H2-type zinc-finger motif lies at 26-50 (WYCQLCEKQCRDENGFKCHISSESH). Low complexity-rich tracts occupy residues 215 to 229 (NTTTTTTNTTTTTTN) and 239 to 253 (NDNNSSNNNYNDQTN). The segment at 215-256 (NTTTTTTNTTTTTTNKNIFDKLKTNDNNSSNNNYNDQTNPKP) is disordered.

It belongs to the KIN17 family.

In Dictyostelium discoideum (Social amoeba), this protein is KIN17-like protein.